Reading from the N-terminus, the 971-residue chain is Endoplasmic reticulum calcium ATPase srcA (971 aa).

Residues 1–25 are Cytoplasmic-facing; the sequence is MNNEALAEDPPTPLWELVLEQFKDQ. Residues 26–46 traverse the membrane as a helical segment; it reads LVLILLGSAAVSFVLALFEEG. The Lumenal segment spans residues 47–49; sequence DDW. Residues 50–70 form a helical membrane-spanning segment; that stretch reads TAFVDPVVILTILILNAVVGV. At 71-217 the chain is on the cytoplasmic side; it reads TQESSAEKAI…PTPLKQKLND (147 aa). The chain crosses the membrane as a helical span at residues 218-238; sequence FGDMLAKVITVICVLVWLINV. Over 239-262 the chain is Lumenal; it reads EHFNDPAHGGWAKGAIYYLKIAVS. The helical transmembrane segment at 263–283 threads the bilayer; the sequence is LGVAAIPEGLAVVITTCLALG. Residues valine 265, alanine 266, isoleucine 268, and glutamate 270 each coordinate Ca(2+). The Cytoplasmic portion of the chain corresponds to 284–718; sequence TRKMAAKNAV…GRSIYSNTQQ (435 aa). The 4-aspartylphosphate intermediate role is filled by aspartate 312. Mg(2+) is bound by residues aspartate 312 and threonine 314. Threonine 314, glutamate 402, arginine 453, lysine 473, arginine 518, arginine 637, and lysine 643 together coordinate ATP. Aspartate 662 is a binding site for Mg(2+). Residue asparagine 665 coordinates ATP. Residues 719 to 741 form a helical membrane-spanning segment; it reads FIRYLISSNIGEVVSIFLTAALG. Residues asparagine 727 and glutamate 730 each coordinate Ca(2+). Topologically, residues 742 to 750 are lumenal; the sequence is MPEALIPVQ. Residues 751–770 traverse the membrane as a helical segment; that stretch reads LLWVNLVTDGLPATALSFNP. Ca(2+)-binding residues include asparagine 755, threonine 758, and aspartate 759. The Cytoplasmic segment spans residues 771–795; sequence PDHDVMRRAPRKRDEPLVGGWLLFR. A helical transmembrane segment spans residues 796–816; sequence YLAIGTYVGAATVFGYIWWFV. Topologically, residues 817–854 are lumenal; sequence YNPEGPQISFWQLSHFHKCSAQFPEIGCEMFSNEMSRS. A helical transmembrane segment spans residues 855-875; sequence ASTVSLSILVVIEMLNAMNAL. Residue glutamate 867 coordinates Ca(2+). The Cytoplasmic segment spans residues 876-891; sequence SSSESLLAFPLWNNMM. A helical transmembrane segment spans residues 892-912; it reads LVYAIILSMTLHFAILYIPFL. Residues 913-917 lie on the Lumenal side of the membrane; it reads QTLFS. A helical transmembrane segment spans residues 918 to 938; the sequence is ILPLNWTEWKAVLAISAPVVA. Residues 939-971 lie on the Cytoplasmic side of the membrane; that stretch reads IDELLKYAERRLYTLPAIAGEQQNGVAFKPKKA.

Belongs to the cation transport ATPase (P-type) (TC 3.A.3) family. Mg(2+) is required as a cofactor.

The protein resides in the endoplasmic reticulum membrane. The catalysed reaction is Ca(2+)(in) + ATP + H2O = Ca(2+)(out) + ADP + phosphate + H(+). Its function is as follows. Magnesium-dependent enzyme catalyzes the hydrolysis of ATP coupled with the translocation of calcium from the cytosol to the endoplasmic reticulum lumen. Its activity is coupled to the unfolded protein response (UPR) and Ca(2+) import into the endoplasmioc reticulum is important for redox homeostasis, virulence, cell wall biosynthesis, and resistance to antifungal compounds that inhibit Ca2+ signaling. With pmrA, promotes radial growth and conidiation. The protein is Endoplasmic reticulum calcium ATPase srcA (srcA) of Aspergillus fumigatus (strain ATCC MYA-4609 / CBS 101355 / FGSC A1100 / Af293) (Neosartorya fumigata).